Consider the following 421-residue polypeptide: Fumarylacetoacetase (421 aa).

A Ca(2+)-binding site is contributed by Asp-131. His-138 acts as the Proton acceptor in catalysis. Arg-147 lines the substrate pocket. The Ca(2+) site is built by Glu-204, Glu-206, and Asp-238. Asp-238 is a Mg(2+) binding site. Positions 245 and 249 each coordinate substrate. The Mg(2+) site is built by Lys-258 and Thr-262. Thr-355 is a substrate binding site.

This sequence belongs to the FAH family. Ca(2+) serves as cofactor. Requires Mg(2+) as cofactor.

It catalyses the reaction 4-fumarylacetoacetate + H2O = acetoacetate + fumarate + H(+). The protein operates within amino-acid degradation; L-phenylalanine degradation; acetoacetate and fumarate from L-phenylalanine: step 6/6. Functionally, converts fumarylacetoacetate to acetoacetate and fumarate. Involved in tyrosine catabolic pathway. Catalyzes the final step in the tyrosine degradation pathway. The protein is Fumarylacetoacetase of Arabidopsis thaliana (Mouse-ear cress).